The primary structure comprises 363 residues: Galanin receptor 2a (363 aa).

At 1–23 (MNASQQIHVFSSHWKVESVIISL) the chain is on the extracellular side. Residues 24–44 (IFSMIFLVGTVGNCLVLAVLI) traverse the membrane as a helical segment. Residues 45 to 54 (RNGQMNTKST) are Cytoplasmic-facing. The helical transmembrane segment at 55–75 (NLFILNLGLADLCFIVFCVPL) threads the bilayer. At 76 to 94 (QATIYTMDEWVFGAFVCKA) the chain is on the extracellular side. A disulfide bond links Cys92 and Cys169. Residues 95-115 (VHFIIYLTMYASIFTLAAVSL) traverse the membrane as a helical segment. Residues 116-135 (DRYLAIRYPLRSRETRTPRN) are Cytoplasmic-facing. The helical transmembrane segment at 136–156 (ALTSISLVWALSLFFSSPYLS) threads the bilayer. The Extracellular portion of the chain corresponds to 157-179 (YYQQMDLDGTTVCIPAWSVHHRQ). The helical transmembrane segment at 180-200 (AMDICTFIFGYLIPVLILGIT) threads the bilayer. Residues 201–230 (YARTIRYLWTSVDPMQDMSESRKAKRKVTK) lie on the Cytoplasmic side of the membrane. Residues 231–251 (MIIIVAVLFCLCWLPHHLVIL) form a helical membrane-spanning segment. The Extracellular segment spans residues 252-268 (CMWFGHFPLNHTTYVLR). A helical transmembrane segment spans residues 269–289 (ILSHLVAYANSCLNPIVYALV). At 290-363 (SKHFRKGFKK…TSAFMTFNVT (74 aa)) the chain is on the cytoplasmic side.

Belongs to the G-protein coupled receptor 1 family. In terms of tissue distribution, expressed in neurons in the ventral area of the interpeduncular nucleus (IPN) where expression often overlaps with spx1.

It localises to the membrane. In terms of biological role, receptor for the hormone galanin. Receptor for the hormones spexin-1 and spexin-2. This is Galanin receptor 2a from Danio rerio (Zebrafish).